The chain runs to 495 residues: DNA double-strand break repair helicase HerA (495 aa).

Residues Arg-142, 151–156 (GSGKSN), and 459–460 (KI) each bind ATP.

The protein belongs to the HerA family. Interacts with Rad50 and Mre11.

It catalyses the reaction Couples ATP hydrolysis with the unwinding of duplex DNA at the replication fork by translocating in the 5'-3' direction. This creates two antiparallel DNA single strands (ssDNA). The leading ssDNA polymer is the template for DNA polymerase III holoenzyme which synthesizes a continuous strand.. The catalysed reaction is ATP + H2O = ADP + phosphate + H(+). It carries out the reaction Couples ATP hydrolysis with the unwinding of duplex DNA by translocating in the 3'-5' direction.. With respect to regulation, ATPase activity is slightly stimulated by either circular single- or double-stranded (ds)DNA with a weak preference for dsDNA. Its function is as follows. Involved in DNA double-strand break (DSB) repair. Probably acts with NurA to stimulate resection of the 5' strand and produce the long 3' single-strand that is required for RadA loading. Has DNA-dependent ATPase activity and bidirectional DNA helicase activity. Loads on either a 3' or a 5' DNA tail for subsequent DNA unwinding; has no activity on blunt-end DNA. The sequence is that of DNA double-strand break repair helicase HerA from Sulfolobus acidocaldarius (strain ATCC 33909 / DSM 639 / JCM 8929 / NBRC 15157 / NCIMB 11770).